The sequence spans 115 residues: Large ribosomal subunit protein bL19 (115 aa).

Belongs to the bacterial ribosomal protein bL19 family.

Functionally, this protein is located at the 30S-50S ribosomal subunit interface and may play a role in the structure and function of the aminoacyl-tRNA binding site. The chain is Large ribosomal subunit protein bL19 from Oleidesulfovibrio alaskensis (strain ATCC BAA-1058 / DSM 17464 / G20) (Desulfovibrio alaskensis).